We begin with the raw amino-acid sequence, 254 residues long: Alcohol dehydrogenase 2 (254 aa).

10–33 (FVAGLGGIGLDTSREIVKSGPKNL) is a binding site for NAD(+). A substrate-binding site is contributed by serine 138. The active-site Proton acceptor is the tyrosine 151.

This sequence belongs to the short-chain dehydrogenases/reductases (SDR) family. In terms of assembly, homodimer.

The catalysed reaction is a primary alcohol + NAD(+) = an aldehyde + NADH + H(+). It catalyses the reaction a secondary alcohol + NAD(+) = a ketone + NADH + H(+). This Drosophila hydei (Fruit fly) protein is Alcohol dehydrogenase 2 (Adh2).